The chain runs to 399 residues: MPLQAIVSFLRLDIAAGVILVGAAVLALIAANSPAAALYEQVFQTPFVIGYGPWLLEKPLLLWINDGLMAVFFLLVGLEIKREVRGGELSTPRLAALPAVAAVGGMVVPALIYASLTWGDAFALRGWAIPAATDIAFALGILTLLGPRVPISLKIFLTALAIIDDLGAILIIAFFYTASLSPLALLLAAACLALLIGLNLSGQRRLWPYLLIGVVLWVCVLKSGVHATLAGVVLALTIPLGATDDESASADKPLERLEHGLHPWVTYAILPLFAFANAGVSLAGLPPSALLAPVPLGIVLGLFLGKQIGVFGFSWLAIRSGLAPMPQGARWRDLYGVALITGVGFTMSLFIGTLAFETSDPLAADFGTEVRLGVLSGSLLSGVIGYLVLRLSRRNPATE.

The next 11 membrane-spanning stretches (helical) occupy residues 12–32 (LDIA…IAAN), 60–80 (LLLW…GLEI), 94–114 (LAAL…LIYA), 126–146 (GWAI…TLLG), 155–175 (IFLT…IAFF), 178–198 (ASLS…LIGL), 206–226 (LWPY…SGVH), 263–283 (PWVT…VSLA), 284–304 (GLPP…GLFL), 336–356 (GVAL…TLAF), and 372–392 (LGVL…LRLS).

Belongs to the NhaA Na(+)/H(+) (TC 2.A.33) antiporter family.

The protein localises to the cell inner membrane. It catalyses the reaction Na(+)(in) + 2 H(+)(out) = Na(+)(out) + 2 H(+)(in). Its function is as follows. Na(+)/H(+) antiporter that extrudes sodium in exchange for external protons. The polypeptide is Na(+)/H(+) antiporter NhaA (Rhodospirillum rubrum (strain ATCC 11170 / ATH 1.1.1 / DSM 467 / LMG 4362 / NCIMB 8255 / S1)).